The chain runs to 361 residues: GDSL esterase/lipase At2g40250 (361 aa).

The signal sequence occupies residues 1 to 28 (MNRNQHKPMFVTFLINILLLQLLNLTNA). S43 acts as the Nucleophile in catalysis. Residues D337 and H340 contribute to the active site.

It belongs to the 'GDSL' lipolytic enzyme family.

It localises to the secreted. The polypeptide is GDSL esterase/lipase At2g40250 (Arabidopsis thaliana (Mouse-ear cress)).